Consider the following 93-residue polypeptide: Putative aspartate aminotransferase (93 aa).

The protein belongs to the class-I pyridoxal-phosphate-dependent aminotransferase family. As to quaternary structure, homodimer. The cofactor is pyridoxal 5'-phosphate.

The protein localises to the cytoplasm. It carries out the reaction L-aspartate + 2-oxoglutarate = oxaloacetate + L-glutamate. In Methylorubrum extorquens (Methylobacterium dichloromethanicum), this protein is Putative aspartate aminotransferase.